We begin with the raw amino-acid sequence, 135 residues long: ATP synthase epsilon chain (135 aa).

Residues Thr101–Phe122 form a disordered region.

The protein belongs to the ATPase epsilon chain family. In terms of assembly, F-type ATPases have 2 components, CF(1) - the catalytic core - and CF(0) - the membrane proton channel. CF(1) has five subunits: alpha(3), beta(3), gamma(1), delta(1), epsilon(1). CF(0) has three main subunits: a, b and c.

Its subcellular location is the cellular thylakoid membrane. Its function is as follows. Produces ATP from ADP in the presence of a proton gradient across the membrane. In Synechococcus sp. (strain CC9311), this protein is ATP synthase epsilon chain.